The sequence spans 631 residues: Phosphomethylpyrimidine synthase (631 aa).

Substrate contacts are provided by residues asparagine 239, methionine 268, tyrosine 297, histidine 333, 353–355 (SRG), 394–397 (DGLR), and glutamate 433. A Zn(2+)-binding site is contributed by histidine 437. Tyrosine 460 is a substrate binding site. Histidine 501 serves as a coordination point for Zn(2+). Residues cysteine 581, cysteine 584, and cysteine 589 each contribute to the [4Fe-4S] cluster site.

It belongs to the ThiC family. In terms of assembly, homodimer. [4Fe-4S] cluster serves as cofactor.

The catalysed reaction is 5-amino-1-(5-phospho-beta-D-ribosyl)imidazole + S-adenosyl-L-methionine = 4-amino-2-methyl-5-(phosphooxymethyl)pyrimidine + CO + 5'-deoxyadenosine + formate + L-methionine + 3 H(+). It functions in the pathway cofactor biosynthesis; thiamine diphosphate biosynthesis. Its function is as follows. Catalyzes the synthesis of the hydroxymethylpyrimidine phosphate (HMP-P) moiety of thiamine from aminoimidazole ribotide (AIR) in a radical S-adenosyl-L-methionine (SAM)-dependent reaction. The chain is Phosphomethylpyrimidine synthase from Ralstonia nicotianae (strain ATCC BAA-1114 / GMI1000) (Ralstonia solanacearum).